A 622-amino-acid polypeptide reads, in one-letter code: MRGLLCWPVLLLLLQPWETQLQLTGPRCHTGPLDLVFVIDSSRSVRPFEFETMRQFLMGLLRGLNVGPNATRVGVIQYSSQVQSVFPLRAFSRREDMERAIRDLVPLAQGTMTGLAIQYAMNVAFSVAEGARPPEERVPRVAVIVTDGRPQDRVAEVAAQARARGIEIYAVGVQRADVGSLRAMASPPLDEHVFLVESFDLIQEFGLQFQSRLCGKDQCAEGGHGCQHQCVNAWAMFHCTCNPGYKLAADNKSCLAIDLCAEGTHGCEHHCVNSPGSYFCHCQVGFVLQQDQRSCRAIDYCSFGNHSCQHECVSTPGGPRCHCREGHDLQPDGRSCQVRDLCNGVDHGCEFQCVSEGLSYRCLCPEGRQLQADGKSCNRCREGHVDLVLLVDGSKSVRPQNFELVKRFVNQIVDFLDVSPEGTRVGLVQFSSRVRTEFPLGRYGTAAEVKQAVLAVEYMERGTMTGLALRHMVEHSFSEAQGARPRALNVPRVGLVFTDGRSQDDISVWAARAKEEGIVMYAVGVGKAVEAELREIASEPAELHVSYAPDFGTMTHLLENLRGSICPEEGISAGTELRSPCECESLVEFQGRTLGALESLTLNLAQLTARLEDLENQLANQK.

An N-terminal signal peptide occupies residues 1–18 (MRGLLCWPVLLLLLQPWE). Residues 34 to 213 (DLVFVIDSSR…EFGLQFQSRL (180 aa)) enclose the VWFA 1 domain. An N-linked (GlcNAc...) asparagine glycan is attached at N69. Residues 215 to 255 (GKDQCAEGGHGCQHQCVNAWAMFHCTCNPGYKLAADNKSCL) enclose the EGF-like 1; incomplete domain. Disulfide bonds link C219–C230, C226–C239, C241–C254, C260–C271, C267–C280, C282–C295, C301–C312, C308–C321, C323–C336, C342–C353, C349–C362, and C364–C377. A glycan (N-linked (GlcNAc...) asparagine) is linked at N251. EGF-like domains are found at residues 256–292 (AIDL…QQDQ), 297–337 (AIDY…RSCQ), and 342–377 (CNGV…GKSC). The N-linked (GlcNAc...) asparagine glycan is linked to N305. The 176-residue stretch at 386–561 (DLVLLVDGSK…GTMTHLLENL (176 aa)) folds into the VWFA 2 domain. Residues 591 to 622 (GRTLGALESLTLNLAQLTARLEDLENQLANQK) adopt a coiled-coil conformation.

As to quaternary structure, interacts with COMP. In terms of tissue distribution, embryonic kidney, lung and placenta.

It localises to the secreted. Major component of the extracellular matrix of cartilage. This Homo sapiens (Human) protein is Matrilin-4 (MATN4).